The primary structure comprises 530 residues: Chaperonin GroEL 2 (530 aa).

ATP-binding positions include 30–33, lysine 51, 87–91, glycine 415, 479–481, and aspartate 495; these read TLGP, DGTTT, and NAA.

This sequence belongs to the chaperonin (HSP60) family. As to quaternary structure, forms a cylinder of 14 subunits composed of two heptameric rings stacked back-to-back. Interacts with the co-chaperonin GroES.

Its subcellular location is the cytoplasm. It catalyses the reaction ATP + H2O + a folded polypeptide = ADP + phosphate + an unfolded polypeptide.. Its function is as follows. Together with its co-chaperonin GroES, plays an essential role in assisting protein folding. The GroEL-GroES system forms a nano-cage that allows encapsulation of the non-native substrate proteins and provides a physical environment optimized to promote and accelerate protein folding. The chain is Chaperonin GroEL 2 from Vibrio cholerae serotype O1 (strain ATCC 39315 / El Tor Inaba N16961).